A 416-amino-acid chain; its full sequence is Cyclic dinucleotide synthase CdnG (416 aa).

S72 lines the GTP pocket. Active-site residues include D89, D91, and D140. D91 lines the GTP pocket. D91 provides a ligand contact to Mg(2+). Residues 145 to 167 are disordered; the sequence is RRRAPKEKEGEIPHAKKGTRSDP. Residues 150-167 are compositionally biased toward basic and acidic residues; sequence KEKEGEIPHAKKGTRSDP. Positions 236, 253, 305, 306, and 309 each coordinate GTP.

It belongs to the CD-NTase family. G10 subfamily. It depends on Mg(2+) as a cofactor.

It carries out the reaction UTP + GTP = 3',3'-cGMP-UMP + 2 diphosphate. The catalysed reaction is GTP + ATP = 3',3'-cGAMP + 2 diphosphate. The enzyme catalyses 2 ATP = 3',3'-c-di-AMP + 2 diphosphate. Cyclic nucleotide synthase (second messenger synthase) of a CBASS antivirus system. CBASS (cyclic oligonucleotide-based antiphage signaling system) provides immunity against bacteriophage. The CD-NTase protein synthesizes cyclic nucleotides in response to infection; these serve as specific second messenger signals. The signals activate a diverse range of effectors, leading to bacterial cell death and thus abortive phage infection. A type II-short CBASS system. In terms of biological role, cyclic dinucleotide synthase that catalyzes the synthesis of predominantly 3'3'-cGMP-UMP, followed by 3'3'-cGAMP and c-di-AMP in a reaction mixture of ATP, CTP, GTP and UTP. The cyclic nucleotide products are second messengers that activate the CBASS Cap5 effector nuclease, leading to DNA degradation and probably cell death. Cyclic nucleotides do not activate the effector equally; reactions with ATP/GTP, ATP/UTP and ATP alone activate Cap5, whereas reaction with GTP/UTP (the major in vitro product) do not. This is Cyclic dinucleotide synthase CdnG from Bradyrhizobium diazoefficiens (strain JCM 10833 / BCRC 13528 / IAM 13628 / NBRC 14792 / USDA 110).